Reading from the N-terminus, the 438-residue chain is Methylenetetrahydrofolate--tRNA-(uracil-5-)-methyltransferase TrmFO (438 aa).

10–15 (GGGLAG) is a binding site for FAD.

The protein belongs to the MnmG family. TrmFO subfamily. FAD is required as a cofactor.

It is found in the cytoplasm. It catalyses the reaction uridine(54) in tRNA + (6R)-5,10-methylene-5,6,7,8-tetrahydrofolate + NADH + H(+) = 5-methyluridine(54) in tRNA + (6S)-5,6,7,8-tetrahydrofolate + NAD(+). The catalysed reaction is uridine(54) in tRNA + (6R)-5,10-methylene-5,6,7,8-tetrahydrofolate + NADPH + H(+) = 5-methyluridine(54) in tRNA + (6S)-5,6,7,8-tetrahydrofolate + NADP(+). Catalyzes the folate-dependent formation of 5-methyl-uridine at position 54 (M-5-U54) in all tRNAs. The chain is Methylenetetrahydrofolate--tRNA-(uracil-5-)-methyltransferase TrmFO from Trichormus variabilis (strain ATCC 29413 / PCC 7937) (Anabaena variabilis).